The sequence spans 136 residues: UPF0310 protein HH_1062 (136 aa).

Belongs to the UPF0310 family.

The protein is UPF0310 protein HH_1062 of Helicobacter hepaticus (strain ATCC 51449 / 3B1).